A 914-amino-acid polypeptide reads, in one-letter code: Ubiquitin carboxyl-terminal hydrolase 20 (914 aa).

Residues 6-111 (DLCPHLDSIG…GSSSKFSEQD (106 aa)) form a UBP-type zinc finger. Zn(2+) contacts are provided by Cys-8, His-10, Cys-30, Cys-33, Cys-43, Cys-48, Cys-53, His-60, His-64, His-70, Cys-83, and Cys-86. 3 positions are modified to phosphoserine: Ser-112, Ser-132, and Ser-134. One can recognise a USP domain in the interval 145–685 (TGMKNLGNSC…EGYVLFYRKS (541 aa)). The active-site Nucleophile is Cys-154. Disordered stretches follow at residues 257–347 (LTEA…VDED) and 360–415 (QPAE…ASPV). Thr-258 carries the post-translational modification Phosphothreonine. Positions 259-279 (EARDSDSSDTDEKREGDRSPS) are enriched in basic and acidic residues. Ser-305 is modified (phosphoserine). Residues 316-332 (EAGRAISEKERMKDRKF) are compositionally biased toward basic and acidic residues. The residue at position 368 (Ser-368) is a Phosphoserine. Phosphothreonine is present on Thr-377. Phosphoserine is present on residues Ser-408 and Ser-413. The active-site Proton acceptor is His-643. DUSP domains follow at residues 687-780 (EEAM…LYVC) and 789-892 (ALAK…RQSV).

It belongs to the peptidase C19 family. USP20/USP33 subfamily. As to quaternary structure, interacts with VHL, leading to its ubiquitination and subsequent degradation. Interacts with CCP110. Interacts with DIO2. Interacts with HIF1A. Interacts with ADRB2. Interacts with USP18. Ubiquitinated via a VHL-dependent pathway for proteasomal degradation.

It localises to the cytoplasm. The protein resides in the endoplasmic reticulum. It is found in the perinuclear region. Its subcellular location is the cytoskeleton. The protein localises to the microtubule organizing center. It localises to the centrosome. It carries out the reaction Thiol-dependent hydrolysis of ester, thioester, amide, peptide and isopeptide bonds formed by the C-terminal Gly of ubiquitin (a 76-residue protein attached to proteins as an intracellular targeting signal).. Deubiquitinating enzyme that plays a role in many cellular processes including autophagy, cellular antiviral response or membrane protein biogenesis. Attenuates TLR4-mediated NF-kappa-B signaling by cooperating with beta-arrestin-2/ARRB2 and inhibiting TRAF6 autoubiquitination. Promotes cellular antiviral responses by deconjugating 'Lys-33' and 'Lys-48'-linked ubiquitination of STING1 leading to its stabilization. Plays an essential role in autophagy induction by regulating the ULK1 stability through deubiquitination of ULK1. Acts as a positive regulator for NF-kappa-B activation by TNF-alpha through deubiquitinating 'Lys-48'-linked polyubiquitination of SQSTM1, leading to its increased stability. Acts as a regulator of G-protein coupled receptor (GPCR) signaling by mediating the deubiquitination beta-2 adrenergic receptor (ADRB2). Plays a central role in ADRB2 recycling and resensitization after prolonged agonist stimulation by constitutively binding ADRB2, mediating deubiquitination of ADRB2 and inhibiting lysosomal trafficking of ADRB2. Upon dissociation, it is probably transferred to the translocated beta-arrestins, possibly leading to beta-arrestins deubiquitination and disengagement from ADRB2. This suggests the existence of a dynamic exchange between the ADRB2 and beta-arrestins. Deubiquitinates DIO2, thereby regulating thyroid hormone regulation. Deubiquitinates HIF1A, leading to stabilize HIF1A and enhance HIF1A-mediated activity. Deubiquitinates MCL1, a pivotal member of the anti-apoptotic Bcl-2 protein family to regulate its stability. Within the endoplasmic reticulum, participates with USP33 in the rescue of post-translationally targeted membrane proteins that are inappropriately ubiquitinated by the cytosolic protein quality control in the cytosol. The chain is Ubiquitin carboxyl-terminal hydrolase 20 (USP20) from Homo sapiens (Human).